Here is a 156-residue protein sequence, read N- to C-terminus: Cell division protein SepF (156 aa).

A compositionally biased stretch (basic and acidic residues) spans Ser23–Asp36. Residues Ser23–Ala48 form a disordered region. Residues Pro37–Ala48 show a composition bias toward polar residues.

It belongs to the SepF family. In terms of assembly, homodimer. Interacts with FtsZ.

Its subcellular location is the cytoplasm. In terms of biological role, cell division protein that is part of the divisome complex and is recruited early to the Z-ring. Probably stimulates Z-ring formation, perhaps through the cross-linking of FtsZ protofilaments. Its function overlaps with FtsA. The polypeptide is Cell division protein SepF (Bacillus cereus (strain ATCC 10987 / NRS 248)).